The sequence spans 222 residues: Adenylate kinase (222 aa).

Glycine 10–threonine 15 is a binding site for ATP. The interval serine 30 to valine 59 is NMP. Residues threonine 31, arginine 36, glycine 57–valine 59, glycine 85–arginine 88, and glutamine 92 contribute to the AMP site. Residues glycine 122–aspartate 159 are LID. ATP-binding positions include arginine 123 and threonine 132 to tyrosine 133. A disordered region spans residues valine 135 to glutamate 162. 2 residues coordinate AMP: arginine 156 and arginine 167. Residue glycine 207 participates in ATP binding.

This sequence belongs to the adenylate kinase family. As to quaternary structure, monomer.

The protein resides in the cytoplasm. It carries out the reaction AMP + ATP = 2 ADP. It participates in purine metabolism; AMP biosynthesis via salvage pathway; AMP from ADP: step 1/1. Functionally, catalyzes the reversible transfer of the terminal phosphate group between ATP and AMP. Plays an important role in cellular energy homeostasis and in adenine nucleotide metabolism. This chain is Adenylate kinase, found in Ralstonia nicotianae (strain ATCC BAA-1114 / GMI1000) (Ralstonia solanacearum).